The chain runs to 900 residues: Peroxisomal hydratase-dehydrogenase-epimerase (900 aa).

Short-chain dehydrogenase like regions lie at residues 6 to 230 and 319 to 535; these read SFKD…THES and SLCN…ASEE. NADP(+)-binding residues include Ile-14, Lys-53, Asn-100, Arg-133, Tyr-165, and Lys-169. The Proton donor role is filled by Tyr-165. Lys-169 acts as the Lowers pKa of active site Tyr in catalysis. Residues His-689, Gly-690, Lys-719, Asp-803, Asn-805, Gly-826, Phe-851, and Thr-852 each contribute to the (3R)-3-hydroxydecanoyl-CoA site. The 113-residue stretch at 775–887 folds into the MaoC-like domain; sequence EVPHGKVPDF…DTTRNVIVLD (113 aa). The short motif at 898-900 is the Microbody targeting signal element; the sequence is SKL.

The protein belongs to the short-chain dehydrogenases/reductases (SDR) family. In terms of assembly, monomer.

It is found in the peroxisome. The catalysed reaction is a (3R)-3-hydroxyacyl-CoA = a (2E)-enoyl-CoA + H2O. It carries out the reaction a (3R)-3-hydroxyacyl-CoA + NAD(+) = a 3-oxoacyl-CoA + NADH + H(+). It participates in lipid metabolism; fatty acid beta-oxidation. Functionally, second trifunctional enzyme acting on the beta-oxidation pathway for fatty acids, possessing hydratase-dehydrogenase-epimerase activities. Converts trans-2-enoyl-CoA via D-3-hydroxyacyl-CoA to 3-ketoacyl-CoA. The chain is Peroxisomal hydratase-dehydrogenase-epimerase (FOX2) from Saccharomyces cerevisiae (strain ATCC 204508 / S288c) (Baker's yeast).